The following is a 275-amino-acid chain: Ribosomal RNA small subunit methyltransferase A (275 aa).

Residues N21, L23, G48, E69, D94, and N115 each contribute to the S-adenosyl-L-methionine site.

It belongs to the class I-like SAM-binding methyltransferase superfamily. rRNA adenine N(6)-methyltransferase family. RsmA subfamily.

Its subcellular location is the cytoplasm. It catalyses the reaction adenosine(1518)/adenosine(1519) in 16S rRNA + 4 S-adenosyl-L-methionine = N(6)-dimethyladenosine(1518)/N(6)-dimethyladenosine(1519) in 16S rRNA + 4 S-adenosyl-L-homocysteine + 4 H(+). Functionally, specifically dimethylates two adjacent adenosines (A1518 and A1519) in the loop of a conserved hairpin near the 3'-end of 16S rRNA in the 30S particle. May play a critical role in biogenesis of 30S subunits. The sequence is that of Ribosomal RNA small subunit methyltransferase A from Clostridium botulinum (strain Loch Maree / Type A3).